The chain runs to 88 residues: UPF0298 protein BcerKBAB4_3759 (88 aa).

Belongs to the UPF0298 family.

It localises to the cytoplasm. In Bacillus mycoides (strain KBAB4) (Bacillus weihenstephanensis), this protein is UPF0298 protein BcerKBAB4_3759.